The following is a 409-amino-acid chain: Ligand-gated cation channel ZACN (409 aa).

The first 18 residues, 1–18, serve as a signal peptide directing secretion; that stretch reads MAPRLLLLLLAFLRLGTT. Residues 19–233 are Extracellular-facing; sequence GPLVQGRGFR…LRLQNTALKA (215 aa). N-linked (GlcNAc...) asparagine glycosylation is found at N55 and N99. The cysteines at positions 157 and 171 are disulfide-linked. A helical transmembrane segment spans residues 234 to 254; the sequence is IIALLVPGEALLLADMCGGLL. Residues 255–265 are Cytoplasmic-facing; the sequence is PLRATERIAYK. The chain crosses the membrane as a helical span at residues 266 to 286; it reads VTLLLGYLVFHSSLVQALPSS. Topologically, residues 287-296 are extracellular; sequence SSCNPLLIYY. Residues 297–317 form a helical membrane-spanning segment; that stretch reads FTVLLLLLFISTMETVLLAAL. At 318 to 365 the chain is on the cytoplasmic side; sequence QARGHLSARSSPIPTPRGEQQDHGDLGPHPEEAPGVKESRSWAEAADH. The disordered stretch occupies residues 325–354; that stretch reads ARSSPIPTPRGEQQDHGDLGPHPEEAPGVK. The span at 336-354 shows a compositional bias: basic and acidic residues; the sequence is EQQDHGDLGPHPEEAPGVK. A helical membrane pass occupies residues 366–386; sequence IFFLVYVVGVVCSQFFFIGFW. The Extracellular portion of the chain corresponds to 387–409; that stretch reads MWATCKSDPAPGEAIPHGGQPRL.

Belongs to the ligand-gated ion channel (TC 1.A.9) family. Glycosylated.

The protein localises to the cell membrane. The catalysed reaction is Na(+)(in) = Na(+)(out). It catalyses the reaction K(+)(in) = K(+)(out). Its function is as follows. Ligand-gated cation channel that allows the movement of sodium and potassium monoatomic cations across cell membranes when activated by zinc (Zn2+), copper (Cu2+), and changes in pH. Could also transport cesium. The polypeptide is Ligand-gated cation channel ZACN (Canis lupus familiaris (Dog)).